The following is a 1696-amino-acid chain: E3 ubiquitin-protein ligase listerin (1696 aa).

HEAT repeat units follow at residues 17–55 (RGVL…KVKK), 102–140 (FCKE…KYFR), 144–181 (CSLL…WKYS), 209–250 (AEAS…CWEH), 252–289 (NAQK…RVPT), 354–394 (LISD…KAES), 431–468 (EKNL…GEGD), 542–580 (FPSI…PAVQ), 596–634 (EESD…KWSV), 921–958 (LCTA…AEML), 992–1029 (MDLS…KRGA), 1108–1148 (DLCQ…LIGL), 1150–1188 (VEMI…WLES), 1245–1282 (GIYS…TLGY), 1307–1344 (DSLQ…DLPG), 1371–1405 (VLAI…CFVL), and 1406–1442 (GYLL…LNKL). The segment at 1645–1692 (CMICFSVIHGSNYSLPKKACRTCKKKFHSECLYKWFTSSNKSTCPLCR) adopts an RING-type zinc-finger fold.

Belongs to the LTN1 family. Component of the ribosome quality control complex (RQC), composed of at least the E3 ubiquitin ligase LTN1 and NEMF associated with the 60S ribosomal subunit. The complex probably also contains TCF25 as well as VCP/p97 and its ubiquitin-binding cofactors.

The protein localises to the cytoplasm. It is found in the cytosol. It catalyses the reaction S-ubiquitinyl-[E2 ubiquitin-conjugating enzyme]-L-cysteine + [acceptor protein]-L-lysine = [E2 ubiquitin-conjugating enzyme]-L-cysteine + N(6)-ubiquitinyl-[acceptor protein]-L-lysine.. It participates in protein modification; protein ubiquitination. In terms of biological role, E3 ubiquitin-protein ligase component of the ribosome quality control complex (RQC), a ribosome-associated complex that mediates ubiquitination and extraction of incompletely synthesized nascent chains for proteasomal degradation. Within the RQC complex, LTN1 is recruited to stalled 60S ribosomal subunits by NEMF and mediates ubiquitination of stalled nascent chains. Ubiquitination leads to VCP/p97 recruitment for extraction and degradation of the incomplete translation product. The protein is E3 ubiquitin-protein ligase listerin (ltn1) of Xenopus tropicalis (Western clawed frog).